A 402-amino-acid polypeptide reads, in one-letter code: Type II NADH:quinone oxidoreductase (402 aa).

FAD contacts are provided by residues Gly12 to Ala16, Asn39 to Lys40, and Val83. Glu172 is an active-site residue. Residues Asp302, Ala319–Gln320, and Lys379 contribute to the FAD site.

The protein belongs to the NADH dehydrogenase family. It depends on FAD as a cofactor.

It localises to the cell membrane. The catalysed reaction is a quinone + NADH + H(+) = a quinol + NAD(+). Functionally, alternative, nonproton pumping NADH:quinone oxidoreductase that delivers electrons to the respiratory chain by oxidation of NADH and reduction of quinones, and contributes to the regeneration of NAD(+). This chain is Type II NADH:quinone oxidoreductase, found in Staphylococcus aureus (strain MSSA476).